The primary structure comprises 831 residues: DNA polymerase I, thermostable (831 aa).

One can recognise a 5'-3' exonuclease domain in the interval 174–258 (RPEQWVDYRA…TDLPLEVDFG (85 aa)). Residues 409–831 (ERLFQTLKER…LGEDWLSAKE (423 aa)) are polymerase.

Belongs to the DNA polymerase type-A family.

The catalysed reaction is DNA(n) + a 2'-deoxyribonucleoside 5'-triphosphate = DNA(n+1) + diphosphate. Functionally, in addition to polymerase activity, this DNA polymerase exhibits 5'-3' exonuclease activity. This chain is DNA polymerase I, thermostable (polA), found in Thermus thermophilus.